The following is a 315-amino-acid chain: L-lactate dehydrogenase (315 aa).

3 residues coordinate NAD(+): V12, D33, and Y65. Substrate contacts are provided by residues Q82, R88, and 120–123 (NPVD). NAD(+) is bound by residues 118–120 (ISN) and S143. Substrate is bound at residue 148 to 151 (DTSR). R153 and H168 together coordinate beta-D-fructose 1,6-bisphosphate. The Proton acceptor role is filled by H175. Position 219 is a phosphotyrosine (Y219). Substrate is bound at residue T228.

Belongs to the LDH/MDH superfamily. LDH family. In terms of assembly, homotetramer.

It localises to the cytoplasm. The enzyme catalyses (S)-lactate + NAD(+) = pyruvate + NADH + H(+). The protein operates within fermentation; pyruvate fermentation to lactate; (S)-lactate from pyruvate: step 1/1. With respect to regulation, allosterically activated by fructose 1,6-bisphosphate (FBP). Catalyzes the conversion of lactate to pyruvate. The protein is L-lactate dehydrogenase of Mycoplasmopsis pulmonis (strain UAB CTIP) (Mycoplasma pulmonis).